A 237-amino-acid chain; its full sequence is Ribosomally synthesized cyclic peptide ustiloxin B precursosr (237 aa).

A signal peptide spans 1–19 (MKLILTLLVSGLCALAAPA). 2 propeptides span residues 20–22 (AKR) and 234–237 (HGGH).

In terms of processing, ustA is processed by the subtilisin-like endoprotease kex2 that is outside the ustiloxin B gene cluster, at the C-terminal side of Arg-Lys, after transfer to Golgi apparatus through the endoplasmic reticulum (ER). Cleavage by kex2 generates 16 peptides YAIG-I to YAIG-XVI. To process the precursor peptide further, at least two peptidases are necessary to cleave the N-terminal and C-terminal sides of the Tyr-Ala-Ile-Gly core peptide which serves as backbone for the synthesis of ustiloxin B, through cyclization and modification of the tyrosine. One of the two peptidases must be the serine peptidase ustP; and the other pepdidase is probably ustH. Macrocyclization of the core peptide derived from ustA requires the tyrosinase ustQ, as well as the homologous oxidases ustYa and ustYb, and leads to the production of the first cyclization product N-desmethylustiloxin F. For the formation of N-desmethylustiloxin F, three oxidation steps are required, hydroxylation at the benzylic position, hydroxylation at either the aromatic ring of Tyr or beta-position of Ile, and oxidative cyclization. UstQ may catalyze the oxidation of a phenol moiety, whereas the ustYa and ustYb are most likely responsible for the remaining two-step oxidations. N-desmethylustiloxin F is then methylated by ustM to yield ustiloxin F which in turn substrate of the cytochrome P450 monooxygenase ustC which catalyzes the formation of S-deoxyustiloxin H. The flavoprotein monooxygenases ustF1 and ustF2 then participate in the modification of the side chain of S-deoxyustiloxin H, leading to the synthesis of an oxime intermediate, via ustiloxin H. Finally, carboxylative dehydration performed by the cysteine desulfurase-like protein ustD yields ustiloxin B.

Its pathway is mycotoxin biosynthesis. Ribosomally synthesized cyclic peptide ustiloxin B precursor: Part of the gene cluster that mediates the biosynthesis of the secondary metabolite ustiloxin B, an antimitotic tetrapeptide. The ustA translated product contains a 16-fold repeated peptide embedding the tetrapeptide Tyr-Ala-Ile-Gly, that is converted into the cyclic moiety of ustiloxin B. This is Ribosomally synthesized cyclic peptide ustiloxin B precursosr from Aspergillus flavus (strain ATCC 200026 / FGSC A1120 / IAM 13836 / NRRL 3357 / JCM 12722 / SRRC 167).